Consider the following 282-residue polypeptide: sn-glycerol-3-phosphate transport system permease protein UgpE (282 aa).

6 consecutive transmembrane segments (helical) span residues 14 to 34 (LILI…FVAS), 86 to 106 (MAIA…IVFF), 112 to 132 (MFFF…RILP), 146 to 168 (YAGL…QFFL), 201 to 221 (IAAL…WPLL), and 248 to 268 (WNYV…VVVL). Residues 78–269 (LWNSFVVAMA…IPPILVVVLM (192 aa)) form the ABC transmembrane type-1 domain.

This sequence belongs to the binding-protein-dependent transport system permease family. In terms of assembly, the complex is composed of two ATP-binding proteins (UgpC), two transmembrane proteins (UgpA and UgpE) and a solute-binding protein (UgpB).

Its subcellular location is the cell inner membrane. In terms of biological role, part of the ABC transporter complex UgpBAEC involved in sn-glycerol-3-phosphate (G3P) import. Probably responsible for the translocation of the substrate across the membrane. The sequence is that of sn-glycerol-3-phosphate transport system permease protein UgpE (ugpE) from Brucella suis biovar 1 (strain 1330).